Consider the following 433-residue polypeptide: Pseudopaline synthase (433 aa).

Residues S7 to L27 form a helical membrane-spanning segment. Residues L16 to V19, N39 to H40, and T154 each bind NAD(+). Catalysis depends on H219, which acts as the Proton donor/acceptor. E364 serves as a coordination point for NAD(+).

The protein belongs to the staphylopine dehydrogenase family. As to quaternary structure, homodimer. Interacts with CntL.

Its subcellular location is the cell membrane. It carries out the reaction pseudopaline + NAD(+) + H2O = (2S)-2-amino-4-{[(1S)-1-carboxy-2-(1H-imidazol-4-yl)ethyl]amino}butanoate + 2-oxoglutarate + NADH + H(+). In terms of biological role, catalyzes the NADH-dependent reductive condensation of alpha-ketoglutarate to the intermediate formed by the adjacently encoded enzyme CntL, namely (2S)-2-amino-4-{[(1S)-1-carboxy-2-(1H-imidazol-4-yl)ethyl]amino}butanoate, leading to the production of pseudopaline. This is the last step in the biosynthesis of the metallophore pseudopaline, which is involved in the acquisition of nickel and zinc, and thus enables bacterial growth inside the host, where metal access is limited. Therefore, this enzyme probably contributes to Pseudomonas virulence. Can use neither pyruvate nor NADPH in place of alpha-ketoglutarate and NADH, respectively. This chain is Pseudopaline synthase, found in Pseudomonas aeruginosa (strain UCBPP-PA14).